A 417-amino-acid polypeptide reads, in one-letter code: Acetyltransferase cdmC (417 aa).

N-linked (GlcNAc...) asparagine glycosylation is present at Asn-64. The next 3 helical transmembrane spans lie at 308-328 (IPDG…GYLV), 357-377 (GIFW…YPLL), and 389-409 (LVES…AFIL).

It belongs to the wax synthase family.

The protein localises to the membrane. It catalyses the reaction chrodrimanin A + acetyl-CoA = chrodrimanin B + CoA. The protein operates within secondary metabolite biosynthesis; terpenoid biosynthesis. Acetyltransferase; part of the gene cluster that mediates the biosynthesis of chrodrimanin B, a meroterpenoid that acts as a potent blocker of insect GABA-gated chloride channels. The first step of the pathway is the biosynthesis of 6-hydroxymellein by the polyketide synthase cdmE. The prenyltransferase cdmH acts as a 6-hydroxymellein 5-farnesyltransferase and produces the hydrophobic metabolite verruculide C. The FAD-dependent monooxygenase cdmI further converts verruculide C into verruculide B. The terpene cyclase cdmG then produced the pentacyclic molecule 3-hydroxypentacecilide A, the backbone structure of chrodrimanin B, via folding the farnesyl moiety of the substrate into the chair-boat conformation. The short-chain dehydrogenase/reductase cdmF functions as the 3-OH dehydrogenase that oxidizes the C-3 hydroxyl group of 3-hydroxypentacecilide A and produces chrodrimanin C, the dehydrogenated product of 3-hydroxypentacecilide A. The cytochrome P450 monooxygenase cdmJ then accepts both 3-hydroxypentacecilide A and chrodrimanin C and functions as a C-7-beta-hydroxylase to produce respectively chrodrimanin H and chrodrimanin F. The dioxygenase cdmA accepts chrodrimanin H to afford chrodrimanin E, which is further transformed to chrodrimanin A by the dioxygenase cdmD. CdmA can also accept chrodrimanin C as substrate to convert it into verruculide A, which is further converted into chrodrimanin T by cdmD. The last step of the biosynthesis is proposed to be performed by the acetyltransferase cdmC which acetylates chrodrimanin A to yield chrodrimanin B. The pathway may also lead to the production of additional shunt products, including chrodrimanins T and U. The protein is Acetyltransferase cdmC of Talaromyces verruculosus (Penicillium verruculosum).